Consider the following 190-residue polypeptide: UPF0200 protein TGAM_0868 (190 aa).

ATP is bound at residue 7–14 (GMPGSGKS).

The protein belongs to the UPF0200 family.

In Thermococcus gammatolerans (strain DSM 15229 / JCM 11827 / EJ3), this protein is UPF0200 protein TGAM_0868.